The chain runs to 361 residues: Myricetin 3-O-methyltransferase 3 (361 aa).

Residue Asp-229 participates in S-adenosyl-L-methionine binding. Residue His-267 is the Proton acceptor of the active site.

This sequence belongs to the class I-like SAM-binding methyltransferase superfamily. Cation-independent O-methyltransferase family. In terms of assembly, homodimer. In terms of tissue distribution, mainly expressed in leaves secreting glandular trichomes types 1 and 4 and, to a lesser extent, in storage trichomes type 6.

The catalysed reaction is kaempferol + S-adenosyl-L-methionine = 3-O-methylkaempferol + S-adenosyl-L-homocysteine + H(+). It catalyses the reaction quercetin + S-adenosyl-L-methionine = 3',4',5,7-tetrahydroxy-3-methoxyflavone + S-adenosyl-L-homocysteine + H(+). It carries out the reaction myricetin + S-adenosyl-L-methionine = 3-O-methylmyricetin + S-adenosyl-L-homocysteine + H(+). The enzyme catalyses kaempferide + S-adenosyl-L-methionine = 3,4'-O-dimethylkaempferol + S-adenosyl-L-homocysteine + H(+). The catalysed reaction is isorhamnetin + S-adenosyl-L-methionine = 3,3'-O-dimethylquercetin + S-adenosyl-L-homocysteine + H(+). It catalyses the reaction rhamnetin + S-adenosyl-L-methionine = 3',4',5-trihydroxy-3,7-dimethoxyflavone + S-adenosyl-L-homocysteine + H(+). It carries out the reaction laricitrin + S-adenosyl-L-methionine = 3,3'-O-dimethylmyricetin + S-adenosyl-L-homocysteine + H(+). The enzyme catalyses syringetin + S-adenosyl-L-methionine = 3,3',5'-O-trimethylmyricetin + S-adenosyl-L-homocysteine + H(+). The protein operates within flavonoid metabolism. Its function is as follows. Flavonoid 3-O-methyltransferase involved in the biosynthesis of polymethoxylated flavonoids natural products such as myricetin derivatives, aroma compounds possessing antioxidant properties and exhibiting pharmacological activities such as anti-carcinogen, anti-viral, anti-thrombotic, anti-diabetic, anti-atherosclerotic, and anti-inflammatory effects. Catalyzes S-adenosylmethionine-dependent regioselective 3-O-methylation of flavonoids; active on various hydroxylated flavonoid substrates. Active with myricetin, quercetin, kaempferol, 4'-methyl kaempferol (kaempferide), 3'-methyl quercetin (isorhamnetin), 7-methyl quercetin (rhamnetin), 3'-methyl myricetin (laricitrin) and 3',5'-dimethyl myricetin (syringetin), thus producing 3-methyl myricetin, 3-methyl quercetin, 3-methyl kaempferol, 4',3-methyl kaempferol, 3',3-methyl quercetin, 7,3-dimethyl quercetin, 3',3-dimethyl myricetin and 3',5',3-dimethyl myricetin, respectively. Inactive with flavonol substrates methylated at the 3-hydroxyl position such as 3-O-methyl quercetin. The sequence is that of Myricetin 3-O-methyltransferase 3 from Solanum habrochaites (Wild tomato).